Here is a 494-residue protein sequence, read N- to C-terminus: Glutamyl-tRNA(Gln) amidotransferase subunit A (494 aa).

Active-site charge relay system residues include K79 and S154. The active-site Acyl-ester intermediate is the S178.

Belongs to the amidase family. GatA subfamily. As to quaternary structure, heterotrimer of A, B and C subunits.

It carries out the reaction L-glutamyl-tRNA(Gln) + L-glutamine + ATP + H2O = L-glutaminyl-tRNA(Gln) + L-glutamate + ADP + phosphate + H(+). Its function is as follows. Allows the formation of correctly charged Gln-tRNA(Gln) through the transamidation of misacylated Glu-tRNA(Gln) in organisms which lack glutaminyl-tRNA synthetase. The reaction takes place in the presence of glutamine and ATP through an activated gamma-phospho-Glu-tRNA(Gln). In Clostridium kluyveri (strain NBRC 12016), this protein is Glutamyl-tRNA(Gln) amidotransferase subunit A.